Consider the following 67-residue polypeptide: Conotoxin ArMLCL-012 (67 aa).

Positions 1–19 are cleaved as a signal peptide; sequence MLCLPVFIILLLLASPAAS. The propeptide occupies 20 to 45; sequence NPLEKRIQSDLIRAALEDADTKNDPR. Cysteine 64 is modified (cysteine amide).

The protein belongs to the conotoxin T superfamily. Post-translationally, contains 2 disulfide bonds that can be either 'C1-C3, C2-C4' or 'C1-C4, C2-C3', since these disulfide connectivities have been observed for conotoxins with cysteine framework V (for examples, see AC P0DQQ7 and AC P81755). Expressed by the venom duct.

The protein resides in the secreted. This is Conotoxin ArMLCL-012 from Conus arenatus (Sand-dusted cone).